A 158-amino-acid polypeptide reads, in one-letter code: NAD(P)H-quinone oxidoreductase subunit J, chloroplastic (158 aa).

Belongs to the complex I 30 kDa subunit family. As to quaternary structure, NDH is composed of at least 16 different subunits, 5 of which are encoded in the nucleus.

It is found in the plastid. The protein localises to the chloroplast thylakoid membrane. The catalysed reaction is a plastoquinone + NADH + (n+1) H(+)(in) = a plastoquinol + NAD(+) + n H(+)(out). The enzyme catalyses a plastoquinone + NADPH + (n+1) H(+)(in) = a plastoquinol + NADP(+) + n H(+)(out). NDH shuttles electrons from NAD(P)H:plastoquinone, via FMN and iron-sulfur (Fe-S) centers, to quinones in the photosynthetic chain and possibly in a chloroplast respiratory chain. The immediate electron acceptor for the enzyme in this species is believed to be plastoquinone. Couples the redox reaction to proton translocation, and thus conserves the redox energy in a proton gradient. The sequence is that of NAD(P)H-quinone oxidoreductase subunit J, chloroplastic from Spinacia oleracea (Spinach).